The chain runs to 137 residues: Ubiquitin-conjugating enzyme variant MMS2 (137 aa).

A UBC core domain is found at 5–137; sequence PRNFRLLEEL…LRQPKEGETF (133 aa). At serine 71 the chain carries Phosphoserine.

The protein belongs to the ubiquitin-conjugating enzyme family. In terms of assembly, heterodimer with UBC13.

Its function is as follows. Has a role in the DNA error-free postreplication repair (PRR) pathway. Lacks catalytic activity by itself. The UBC13/MMS2 heterodimer catalyzes the synthesis of non-canonical poly-ubiquitin chains that are linked through 'Lys-63'. This chain is Ubiquitin-conjugating enzyme variant MMS2 (MMS2), found in Saccharomyces cerevisiae (strain ATCC 204508 / S288c) (Baker's yeast).